Consider the following 76-residue polypeptide: uncharacterized protein (76 aa).

This is an uncharacterized protein from African swine fever virus (isolate Tick/Malawi/Lil 20-1/1983) (ASFV).